The following is a 1087-amino-acid chain: Voltage-gated inwardly rectifying potassium channel KCNH3 (1087 aa).

At 1–228 the chain is on the cytoplasmic side; that stretch reads MPAMRGLLAP…HCGALRATWD (228 aa). A PAS domain is found at 18-90; that stretch reads IATRFDGTHS…QQIRKALDEH (73 aa). Residues 93–145 form the PAC domain; that stretch reads FKAELILYRKSGLPFWCLLDVIPIKNEKGEVALFLVSHKDISETKNRGGPDNW. Basic and acidic residues predominate over residues 137–150; the sequence is KNRGGPDNWKERGG. The interval 137–161 is disordered; the sequence is KNRGGPDNWKERGGGRRRYGRAGSK. The chain crosses the membrane as a helical span at residues 229–249; sequence GFILLATLYVAVTVPYSVCVS. Topologically, residues 250 to 259 are extracellular; that stretch reads TAREPSAARG. Residues 260–280 form a helical membrane-spanning segment; it reads PPSVCDLAVEVLFILDIVLNF. Residues 281–302 lie on the Cytoplasmic side of the membrane; that stretch reads RTTFVSKSGQVVFAPKSICLHY. A helical membrane pass occupies residues 303-323; sequence VTTWFLLDVIAALPFDLLHAF. Residues 324–331 are Extracellular-facing; the sequence is KVNVYVGA. A helical; Voltage-sensor membrane pass occupies residues 332-352; it reads HLLKTVRLLRLLRLLPRLDRY. At 353 to 361 the chain is on the cytoplasmic side; the sequence is SQYSAVVLT. Residues 362-382 traverse the membrane as a helical segment; sequence LLMAVFALLAHWVACVWFYIG. Residues 383-456 lie on the Extracellular side of the membrane; that stretch reads QQEIENSESE…GGPSLRSAYI (74 aa). A disordered region spans residues 416-436; the sequence is SPDGGNSSGQSENCSSSGGGS. Residues 419–431 show a composition bias toward low complexity; it reads GGNSSGQSENCSS. Residues Asn-421, Asn-428, and Asn-439 are each glycosylated (N-linked (GlcNAc...) asparagine). The pore-forming intramembrane region spans 457–477; sequence TSLYFALSSLTSVGFGNVSAN. The Selectivity filter signature appears at 468–473; sequence SVGFGN. Residues 478-482 lie on the Extracellular side of the membrane; sequence TDTEK. A helical transmembrane segment spans residues 483–503; that stretch reads IFSICTMLIGALMHAVVFGNV. Residues 504-1087 are Cytoplasmic-facing; sequence TAIIQRMYAR…QWTQEEGTGV (584 aa). 585-700 contacts a nucleoside 3',5'-cyclic phosphate; sequence LFEAASRGCL…FAPRFSRGLR (116 aa). Disordered regions lie at residues 733-813 and 975-1061; these read EKET…LQLP and LMAP…PWDP. Over residues 776-788 the composition is skewed to basic residues; the sequence is TAPRPRLGGRGRP.

It belongs to the potassium channel family. H (Eag) (TC 1.A.1.20) subfamily. Kv12.2/KCNH3 sub-subfamily. As to quaternary structure, the potassium channel is probably composed of a homo- or heterotetrameric complex of pore-forming alpha subunits that can associate with modulating beta subunits. Interacts with KCNE1 and KCNE3; these interactions regulate KCNH3 trafficking to the plasma membrane and its subsequent voltage-gated potassium channel activity. In terms of processing, N-glycosylated. N-glycosylation mediates traffick to the cell membrane but is not necessary for voltage-gated potassium channel activity. In terms of tissue distribution, highly expressed in adult and embryonic brain, in particular in cerebellum, brain stem, hippocampus, cortex and striatum. Also found in pituitary.

It is found in the cell membrane. It carries out the reaction K(+)(in) = K(+)(out). In terms of biological role, pore-forming (alpha) subunit of a voltage-gated inwardly rectifying potassium channel. Charactherized by a fast rate of activation during depolarization followed by a rapid inactivation at much more depolarized value causing inward rectification due to a C-type inactivation mechanism. Exhibits a rapid recovery from inactivation. The chain is Voltage-gated inwardly rectifying potassium channel KCNH3 from Rattus norvegicus (Rat).